The following is a 158-amino-acid chain: Large ribosomal subunit protein bL17 (158 aa).

The tract at residues 119-158 (APAAAPEAEEKGEKKAAKAPKAEKAPKAEKKPAKKAAKAE) is disordered. Positions 126–158 (AEEKGEKKAAKAPKAEKAPKAEKKPAKKAAKAE) are enriched in basic and acidic residues.

Belongs to the bacterial ribosomal protein bL17 family. Part of the 50S ribosomal subunit. Contacts protein L32.

This is Large ribosomal subunit protein bL17 from Anaeromyxobacter sp. (strain K).